The following is a 543-amino-acid chain: Protein GPR108 (543 aa).

The signal sequence occupies residues 1-32; that stretch reads MAVSERRGLGRGSPAEWGQRLLLVLLLGGCSG. Asparagine 57 and asparagine 109 each carry an N-linked (GlcNAc...) asparagine glycan. Positions 149–186 are disordered; sequence SKPGLPKPQATVPRKVDGGGTSAASKPKSTPAVIQGPS. Residues asparagine 200, asparagine 204, and asparagine 228 are each glycosylated (N-linked (GlcNAc...) asparagine). Helical transmembrane passes span 263 to 283, 292 to 312, 336 to 356, 367 to 387, 401 to 421, 449 to 469, and 473 to 493; these read LYMVMSACFLAAGIFWVSILC, IHWLMAALAFTKSISLLFHSI, LLKGALLFITIALIGSGWAFI, VFGIVIPMQVLANVAYIIIES, ILFLVDLICCGAILFPVVWSI, VMVICYVYFTRIIAILLQVAV, and WQWLYQLLVEGSTLAFFVLTG. Residue asparagine 534 is glycosylated (N-linked (GlcNAc...) asparagine).

The protein belongs to the LU7TM family.

It localises to the golgi apparatus. Its subcellular location is the cis-Golgi network membrane. It is found in the trans-Golgi network membrane. The protein localises to the golgi apparatus membrane. In terms of biological role, may play a role in intracellular immune modulation by activating NF-kappaB response and attenuating Toll-like-receptor response. Functionally, (Microbial infection) Plays an essential function in adeno-associated virus (AAV) transduction across multiple serotypes except AAV5. May play a critical role in mediating the endosomal virus escape or in the AAV virions trafficking from endosomes to the nucleus. This is Protein GPR108 from Homo sapiens (Human).